The primary structure comprises 449 residues: Anthocyanidin 3-O-glucosyltransferase 1 (449 aa).

Histidine 3 (proton acceptor) is an active-site residue. Histidine 3 contacts an anthocyanidin. The active-site Charge relay is the aspartate 103. Residues threonine 125, alanine 325, glutamine 327, histidine 342, tryptophan 345, asparagine 346, serine 347, and glutamate 350 each contribute to the UDP-alpha-D-glucose site. Alanine 365 lines the an anthocyanidin pocket. Positions 366 and 367 each coordinate UDP-alpha-D-glucose.

Belongs to the UDP-glycosyltransferase family. Expressed in cotyledons and roots, but not in leaves.

The catalysed reaction is an anthocyanidin + UDP-alpha-D-glucose + H(+) = an anthocyanidin 3-O-beta-D-glucoside + UDP. The protein operates within pigment biosynthesis; anthocyanin biosynthesis. Functionally, in the presence of other necessary color factors, this glycosylation reaction allows the accumulation of anthocyanin pigments. In Manihot esculenta (Cassava), this protein is Anthocyanidin 3-O-glucosyltransferase 1 (GT1).